A 409-amino-acid polypeptide reads, in one-letter code: Ingression protein 1 (409 aa).

In terms of domain architecture, C2 spans 1–114; the sequence is MSEEVWNGNQ…DPKEGYCTWY (114 aa). The segment at 300-409 is disordered; that stretch reads LSYDEDDDDD…TRKRPPPRLS (110 aa). The span at 302–313 shows a compositional bias: acidic residues; that stretch reads YDEDDDDDDEND. Polar residues predominate over residues 315–328; sequence FYSSSHRVSHNYNQ. Low complexity predominate over residues 360 to 377; that stretch reads LDSSSPNSHPHPSGLNSP. The span at 384–399 shows a compositional bias: polar residues; the sequence is TTSNSNFNSRKNSMSP. Ser-392 carries the post-translational modification Phosphoserine. The span at 400 to 409 shows a compositional bias: basic residues; that stretch reads TRKRPPPRLS.

The protein belongs to the INN1/fic1 family. In terms of assembly, interacts with CYK2, CYK3 and IQG1.

It localises to the bud neck. Its function is as follows. Required for the ingression of the plasma membrane into the bud neck at the end of cytokinesis, leading to the separation of the mother and daughter cells. Stimulates the synthesis of the primary septum (PS) by CHS2. The chain is Ingression protein 1 (INN1) from Saccharomyces cerevisiae (strain ATCC 204508 / S288c) (Baker's yeast).